The following is a 1036-amino-acid chain: Lethal(2) giant larvae protein homolog 1 (1036 aa).

WD repeat units follow at residues 38–71, 78–119, 139–175, 199–233, 239–271, 289–331, 339–373, 395–473, 517–592, and 601–662; these read SALAFDPELRIMAIGTRSGAVKIYGAPGVEFTGL, VTQM…GLSF, VTVVLLAAGDTVVLGTESGSIFFLDVATLALLEGQTL, SLQGHLQDPSKILIGYSRGLLVIWSQATQSVEHVF, LESLCWGRGGSNIISSHSDGSYAIWSTDTGSPP, AINK…ETLV, VIDFFTVHSTQPEDGFDNPQALAVLLEEELVVLDL, TCSA…YKLS, QKVA…RVLI, and TAVA…LRQS. Ser-662 is modified (phosphoserine). The interval 670–694 is disordered; that stretch reads RVSGKKRATTASSKLQEANAQLAEQ. Positions 678-693 are enriched in polar residues; sequence TTASSKLQEANAQLAE. WD repeat units follow at residues 722–782, 791–843, 848–901, and 915–938; these read VRCL…KEVQ, AIAV…VSAK, LTAH…VHYS, and VFTRHGQGFYLISPSEFERFSLSA. Thr-957 is subject to Phosphothreonine. 3 positions are modified to phosphoserine: Ser-964, Ser-982, and Ser-989. Residues 980-1002 are disordered; it reads PESCEGSPSSAHSKRADTMEPPE.

The protein belongs to the WD repeat L(2)GL family. Associated with nonmuscle myosin II heavy chain. Interacts with PRKCI/aPKC, PARD6B/Par-6 and PARD6A. Interacts with STX4A. Interacts with DCAF1. Interacts with RAB10 (GDP-bound form); the interaction is direct and promotes RAB10 association with membranes and activation through competition with the Rab inhibitor GDI1. In terms of processing, phosphorylated by PRKCI. In terms of tissue distribution, expressed at high level in the testis and at lower level in ovary, brain, spleen and kidney.

It localises to the early endosome membrane. The protein resides in the golgi apparatus. The protein localises to the trans-Golgi network membrane. Its subcellular location is the golgi apparatus membrane. It is found in the cell projection. It localises to the axon. The protein resides in the cytoplasm. The protein localises to the cytoskeleton. In terms of biological role, cortical cytoskeleton protein found in a complex involved in maintaining cell polarity and epithelial integrity. Involved in the regulation of mitotic spindle orientation, proliferation, differentiation and tissue organization of neuroepithelial cells. Involved in axonogenesis through RAB10 activation thereby regulating vesicular membrane trafficking toward the axonal plasma membrane. The chain is Lethal(2) giant larvae protein homolog 1 (Llgl1) from Rattus norvegicus (Rat).